The chain runs to 67 residues: MAKTDDFKAKTDDQLAEQLGELKREAFNLRFQAATGQLEKASRVKEVRRSIARIKTVQTERARSAAK.

Belongs to the universal ribosomal protein uL29 family.

The protein is Large ribosomal subunit protein uL29 of Sphingopyxis alaskensis (strain DSM 13593 / LMG 18877 / RB2256) (Sphingomonas alaskensis).